The sequence spans 278 residues: Sulfur carrier protein FdhD (278 aa).

Residue Cys121 is the Cysteine persulfide intermediate of the active site. 260–265 (FCKPGR) contributes to the Mo-bis(molybdopterin guanine dinucleotide) binding site.

This sequence belongs to the FdhD family.

It is found in the cytoplasm. Functionally, required for formate dehydrogenase (FDH) activity. Acts as a sulfur carrier protein that transfers sulfur from IscS to the molybdenum cofactor prior to its insertion into FDH. The polypeptide is Sulfur carrier protein FdhD (Salmonella typhi).